The sequence spans 389 residues: Methionyl-tRNA formyltransferase, mitochondrial (389 aa).

The protein belongs to the Fmt family.

Its subcellular location is the mitochondrion. The catalysed reaction is L-methionyl-tRNA(fMet) + (6R)-10-formyltetrahydrofolate = N-formyl-L-methionyl-tRNA(fMet) + (6S)-5,6,7,8-tetrahydrofolate + H(+). Functionally, methionyl-tRNA formyltransferase that formylates methionyl-tRNA in mitochondria and is crucial for translation initiation. This chain is Methionyl-tRNA formyltransferase, mitochondrial (MTFMT), found in Homo sapiens (Human).